The primary structure comprises 144 residues: Maximins 1/H12 (144 aa).

An N-terminal signal peptide occupies residues 1–18 (MNFKYIVAVSFLIASAYA). Residues 19–43 (RSEENDEQSLSQRDVLEEESLREIR) constitute a propeptide that is removed on maturation. N70 bears the Asparagine amide mark. Residues 74–123 (TAEEHEVMKRLEVVMRDLDSLDYPEEASERETRDFNQEEIANLYTKKEKR) constitute a propeptide that is removed on maturation. I143 is subject to Isoleucine amide.

The protein belongs to the bombinin family. Expressed by the skin glands.

It is found in the secreted. Functionally, maximin-1 shows antibacterial activity against both Gram-positive and Gram-negative bacteria. It also shows antimicrobial activity against the fungus C.albicans, but not against A.flavus nor P.uticale. It has little hemolytic activity. It possess a significant cytotoxicity against tumor cell lines. It does not possess a significant anti-HIV activity. It shows high spermicidal activity. Maximin-H12 shows antimicrobial activity against bacteria and against the fungus C.albicans. Shows strong hemolytic activity. The chain is Maximins 1/H12 from Bombina maxima (Giant fire-bellied toad).